Reading from the N-terminus, the 723-residue chain is Transient receptor potential cation channel subfamily V member 5 (723 aa).

At methionine 1–proline 320 the chain is on the cytoplasmic side. 5 ANK repeats span residues leucine 72–threonine 101, valine 110–alanine 139, tyrosine 156–alanine 185, leucine 189–leucine 222, and glutamine 232–tryptophan 261. Residues tyrosine 321–valine 341 form a helical membrane-spanning segment. The Extracellular segment spans residues tyrosine 342–arginine 378. Residue asparagine 351 is glycosylated (N-linked (GlcNAc...) asparagine). Residues leucine 379–phenylalanine 401 form a helical membrane-spanning segment. The Cytoplasmic portion of the chain corresponds to arginine 402–threonine 412. A helical membrane pass occupies residues valine 413–methionine 435. Residues arginine 436–asparagine 441 are Extracellular-facing. Residues glycine 442–serine 462 form a helical membrane-spanning segment. The Cytoplasmic portion of the chain corresponds to arginine 463–arginine 485. A helical transmembrane segment spans residues phenylalanine 486–glutamine 506. An intramembrane region (pore-forming) is located at residues serine 517–proline 537. Aspartate 535 provides a ligand contact to Ca(2+). Residues leucine 550 to methionine 570 traverse the membrane as a helical segment. The Cytoplasmic portion of the chain corresponds to methionine 571–phenylalanine 723. The segment at valine 591–valine 595 is interaction with S100A10. The involved in Ca(2+)-dependent inactivation stretch occupies residues alanine 643–serine 646. Residues glutamate 651–valine 674 are disordered. Positions glutamate 654–glycine 667 are enriched in polar residues. A Phosphothreonine modification is found at threonine 678. Serine 682 carries the post-translational modification Phosphoserine. The segment at arginine 693 to phenylalanine 723 is involved in Ca(2+)-dependent inactivation.

The protein belongs to the transient receptor (TC 1.A.4) family. TrpV subfamily. TRPV5 sub-subfamily. As to quaternary structure, homotetramer and probably heterotetramer with TRPV6. Interacts with TRPV6. Interacts with S100A10 and probably with the ANAX2-S100A10 heterotetramer. The interaction with S100A10 is required for the trafficking to the plasma membrane. Interacts with calmodulin. Interacts with BSPRY, which results in its inactivation. Glycosylated. In terms of tissue distribution, detected in kidney (at protein level). Detected in kidney.

Its subcellular location is the cell membrane. The protein localises to the apical cell membrane. The enzyme catalyses Ca(2+)(in) = Ca(2+)(out). Activated by WNK3. Its function is as follows. Constitutively active calcium selective cation channel thought to be involved in Ca(2+) reabsorption in kidney and intestine. Required for normal Ca(2+) reabsorption in the kidney distal convoluted tubules. The channel is activated by low internal calcium level and the current exhibits an inward rectification. A Ca(2+)-dependent feedback regulation includes fast channel inactivation and slow current decay. Heteromeric assembly with TRPV6 seems to modify channel properties. TRPV5-TRPV6 heteromultimeric concatemers exhibit voltage-dependent gating. The protein is Transient receptor potential cation channel subfamily V member 5 (Trpv5) of Rattus norvegicus (Rat).